We begin with the raw amino-acid sequence, 838 residues long: Periplasmic nitrate reductase (838 aa).

Positions 1–29 form a signal peptide, tat-type signal; sequence MDMSRRTLLKAQAAAAAAAVAGIDLPAEA. One can recognise a 4Fe-4S Mo/W bis-MGD-type domain in the interval 40-96; the sequence is LKWSKAPCRFCGTGCGVMVGVKDGRVVATHGDMQAEVNRGLNCVKGYFLSKIMYGAD. The [4Fe-4S] cluster site is built by cysteine 47, cysteine 50, cysteine 54, and cysteine 82. Residues lysine 84, glutamine 151, asparagine 176, cysteine 180, 213–220, 244–248, 263–265, methionine 374, glutamine 378, asparagine 484, 510–511, lysine 533, aspartate 560, and 720–729 each bind Mo-bis(molybdopterin guanine dinucleotide); these read WGSNMAEM, STYEH, GTD, SD, and TGRVLEHWHS. Phenylalanine 796 contributes to the substrate binding site. Mo-bis(molybdopterin guanine dinucleotide) contacts are provided by asparagine 804 and lysine 821.

It belongs to the prokaryotic molybdopterin-containing oxidoreductase family. NasA/NapA/NarB subfamily. Component of the periplasmic nitrate reductase NapAB complex composed of NapA and NapB. Requires [4Fe-4S] cluster as cofactor. Mo-bis(molybdopterin guanine dinucleotide) serves as cofactor. Post-translationally, predicted to be exported by the Tat system. The position of the signal peptide cleavage has not been experimentally proven.

It localises to the periplasm. It carries out the reaction 2 Fe(II)-[cytochrome] + nitrate + 2 H(+) = 2 Fe(III)-[cytochrome] + nitrite + H2O. Its function is as follows. Catalytic subunit of the periplasmic nitrate reductase complex NapAB. Receives electrons from NapB and catalyzes the reduction of nitrate to nitrite. The sequence is that of Periplasmic nitrate reductase from Methylobacterium sp. (strain 4-46).